Consider the following 454-residue polypeptide: MTKEQWGQLQQRLLKTVGQNNYKNWIEPIEFGSTQDGVATFEVPTNFLGNYVSQNFADLILHEVRQEDPAVRRLRFAVPSHVNATTKPARPAQATAPRAPAEKTPRSTLSTAPLDARFTFDNFIVGKPNELAHAAAKRVAEGGPVTFNPLFLYGGVGLGKTHLMHAIAHELRLRRPEMNVLYLSAEQFMYRFVQALRDRKMMDFKEIFRSVDVLMVDDVQFIAGKGSTQEEFFHTFNALVDQNKQIIISGDRAPGEIKDMEERVKSRLQCGLVVDLHPTDYELRLGILQSKVEQQRKNYPGLDISDGVLEFLAHRISTNVRVLEGALTRLCAFASLVGREIDMELTQDCLSDVLRASERKITVEEIQRKVSDHYNIRLSDMIGPKRLRSYARPRQVAMYLSKKMTSRSLPEIGRRFGGRDHTTVMHGVKRIEELKIQDGQIAEDLELLRRALEE.

The segment at 1–71 (MTKEQWGQLQ…HEVRQEDPAV (71 aa)) is domain I, interacts with DnaA modulators. Positions 71-112 (VRRLRFAVPSHVNATTKPARPAQATAPRAPAEKTPRSTLSTA) are domain II. The tract at residues 82–108 (VNATTKPARPAQATAPRAPAEKTPRST) is disordered. Residues 84–99 (ATTKPARPAQATAPRA) show a composition bias toward low complexity. Positions 113-334 (PLDARFTFDN…GALTRLCAFA (222 aa)) are domain III, AAA+ region. ATP is bound by residues G157, G159, K160, and T161. The domain IV, binds dsDNA stretch occupies residues 335-454 (SLVGREIDME…LELLRRALEE (120 aa)).

Belongs to the DnaA family. In terms of assembly, oligomerizes as a right-handed, spiral filament on DNA at oriC.

The protein resides in the cytoplasm. Functionally, plays an essential role in the initiation and regulation of chromosomal replication. ATP-DnaA binds to the origin of replication (oriC) to initiate formation of the DNA replication initiation complex once per cell cycle. Binds the DnaA box (a 9 base pair repeat at the origin) and separates the double-stranded (ds)DNA. Forms a right-handed helical filament on oriC DNA; dsDNA binds to the exterior of the filament while single-stranded (ss)DNA is stabiized in the filament's interior. The ATP-DnaA-oriC complex binds and stabilizes one strand of the AT-rich DNA unwinding element (DUE), permitting loading of DNA polymerase. After initiation quickly degrades to an ADP-DnaA complex that is not apt for DNA replication. Binds acidic phospholipids. This Roseobacter denitrificans (strain ATCC 33942 / OCh 114) (Erythrobacter sp. (strain OCh 114)) protein is Chromosomal replication initiator protein DnaA.